Consider the following 1881-residue polypeptide: Kinesin-like protein KIF26A (1881 aa).

3 disordered regions span residues 20 to 66 (PARE…AGGG), 145 to 193 (PASH…PPGP), and 309 to 330 (ASKR…STYP). Residue Ser30 is modified to Phosphoserine. The Kinesin motor domain occupies 364–718 (KVKVMLRIWP…VQLAARIHRL (355 aa)). 462–469 (GHMSLGKS) contributes to the ATP binding site. Disordered stretches follow at residues 718-778 (LRRK…SSEQ), 794-827 (SDRE…RDAD), 846-982 (GSEA…QAAL), 1078-1104 (YTSQ…GSPA), 1118-1266 (LSES…PRLP), 1328-1425 (SGSL…PYRP), 1442-1633 (SKVR…SGEL), and 1652-1698 (YESM…TGLQ). Positions 742-751 (RRPPHLRPFH) are enriched in basic residues. Over residues 818 to 827 (RPSEGPRDAD) the composition is skewed to basic and acidic residues. Polar residues predominate over residues 905–915 (SDPSKTGTQSE). Residues 940–950 (LPSPAPPPPRQ) are compositionally biased toward pro residues. The span at 1084-1095 (EGPGDPGEFPEG) shows a compositional bias: low complexity. The span at 1151–1162 (EESKVRSSECGR) shows a compositional bias: basic and acidic residues. Ser1257 is subject to Phosphoserine. The segment covering 1328-1353 (SGSLKTTSGSKKSVSPKGAFFPRPSG) has biased composition (low complexity). A compositionally biased stretch (polar residues) spans 1366–1378 (LEQSTALTPTQAL). Residues 1390-1399 (RGEEEARPSG) are compositionally biased toward basic and acidic residues. Over residues 1400-1412 (RSDSSVPKATSSL) the composition is skewed to polar residues. Low complexity-rich tracts occupy residues 1477-1489 (PAKG…PPAG), 1524-1537 (PGPR…PGIG), and 1575-1587 (WGST…NDSG). A compositionally biased stretch (polar residues) spans 1616-1629 (RYSSGHGSDNSSVL). Phosphoserine is present on Ser1654. The segment covering 1664-1675 (SASSAPDSMSES) has biased composition (low complexity). A compositionally biased stretch (basic residues) spans 1685–1698 (RSLKSPKKRATGLQ). Positions 1780–1812 (LRLAERRQQRLQEVQAKRDHLCEELAETQGRLM) form a coiled coil.

The protein belongs to the TRAFAC class myosin-kinesin ATPase superfamily. Kinesin family. KIF26 subfamily. As to quaternary structure, interacts with GRB2 (via SH2 domain). Expressed in several neuronal populations.

The protein localises to the cytoplasm. It localises to the cytoskeleton. Atypical kinesin that plays a key role in enteric neuron development. Acts by repressing a cell growth signaling pathway in the enteric nervous system development, possibly via its interaction with GRB2 that prevents GRB2-binding to SHC, thereby attenating the GDNF-Ret signaling. Binds to microtubules but lacks microtubule-based motility due to the absence of ATPase activity. Plays a critical role in cerebral cortical development. It probably acts as a microtubule stabilizer that regulates neurite growth and radial migration of cortical excitatory neurons. In Mus musculus (Mouse), this protein is Kinesin-like protein KIF26A (Kif26a).